A 296-amino-acid chain; its full sequence is Bifunctional protein FolD (296 aa).

NADP(+) is bound by residues 166–168 (GRS), Ser-195, and Thr-236.

This sequence belongs to the tetrahydrofolate dehydrogenase/cyclohydrolase family. As to quaternary structure, homodimer.

The catalysed reaction is (6R)-5,10-methylene-5,6,7,8-tetrahydrofolate + NADP(+) = (6R)-5,10-methenyltetrahydrofolate + NADPH. It carries out the reaction (6R)-5,10-methenyltetrahydrofolate + H2O = (6R)-10-formyltetrahydrofolate + H(+). It participates in one-carbon metabolism; tetrahydrofolate interconversion. In terms of biological role, catalyzes the oxidation of 5,10-methylenetetrahydrofolate to 5,10-methenyltetrahydrofolate and then the hydrolysis of 5,10-methenyltetrahydrofolate to 10-formyltetrahydrofolate. The polypeptide is Bifunctional protein FolD (Dehalococcoides mccartyi (strain ATCC BAA-2266 / KCTC 15142 / 195) (Dehalococcoides ethenogenes (strain 195))).